The primary structure comprises 275 residues: Putative rhamnulose-1-phosphate aldolase (275 aa).

Glu117 is a catalytic residue. The Zn(2+) site is built by His141, His143, and His212.

Belongs to the aldolase class II family. RhaD subfamily. In terms of assembly, homotetramer. Requires Zn(2+) as cofactor.

The protein resides in the cytoplasm. It catalyses the reaction L-rhamnulose 1-phosphate = (S)-lactaldehyde + dihydroxyacetone phosphate. Its pathway is carbohydrate degradation; L-rhamnose degradation; glycerone phosphate from L-rhamnose: step 3/3. Functionally, catalyzes the reversible cleavage of L-rhamnulose-1-phosphate to dihydroxyacetone phosphate (DHAP) and L-lactaldehyde. The chain is Putative rhamnulose-1-phosphate aldolase from Salmonella typhi.